The chain runs to 179 residues: Replication restart protein DnaT (179 aa).

A compositionally biased stretch (polar residues) spans 151-168; it reads SRSSNGGMPQRDINSVSE. Positions 151 to 179 are disordered; sequence SRSSNGGMPQRDINSVSEPDNHIPPGFRG.

It belongs to the DnaT family. In terms of assembly, homooligomerizes. Interacts with PriB. Component of the replication restart primosome. Primosome assembly occurs via a 'hand-off' mechanism. PriA binds to replication forks, subsequently PriB then DnaT bind; DnaT then displaces ssDNA to generate the helicase loading substrate.

Involved in the restart of stalled replication forks, which reloads the replicative helicase on sites other than the origin of replication. Can function in multiple replication restart pathways. Displaces ssDNA from a PriB-ssDNA complex. Probably forms a spiral filament on ssDNA. The chain is Replication restart protein DnaT from Salmonella arizonae (strain ATCC BAA-731 / CDC346-86 / RSK2980).